The chain runs to 738 residues: MHRGGDRSTDPSSGPAPGSRGGGDGRFGRGPSRWSSGGGGGGSGSPPHRFSRGGGGGGGDGGGGGGGGGRFHPYRGPSDHSGGGGYRSGGGGEYGEPGSGPRHRYGSGRGDHSDHDNRNNYVKLFIGSVPRTATEDDVRPLFEEHGDVVEVALIKDRKTGEQQGCCFVKYATSEEAERAIRALHNQYTLPGAMGPIQVRYADGERERHGAIEHKLFVASLNKQATAKEIEEIFAPYGHVEDVYIMKDGMRQSRGCGFVKFSSREPALAAMSALSGNYVMRGCEQPLIIRFADPKRPRPGESRGGPAFGGPGFSPRSDAALVIRPTANLDEPRGRHMPPDSWHPSSPRSAPHQFNNFGSDNPMAPKGSTVTSTTDTATFRPQMFSGNGSLSSQTAVPSSSHMGMNPPPMAQGHHLGGQQIPPLQKLPGLPQNFPVQLQNNQLGQPLQGPAQQIGQLQVPQSMGPGSFGQNRLSGQLPVSQPLMQQNASVSAVQVPSAVSNSMQAIPGQQHLPSNVAPQMLQQPVQQMPSQAPQLLLQQQAALQSSYQSSQQAIYQLQQQLQLMQQQQQSNLNHQQPTQGQPVQSSNPGAPNAIIPSNINTIPQQATSPAVPLTCNWTEHTSPEGFKYYYNSITRESKWDKPEEYVLYEQQQQQQQQQKLLLLQQHQQKLAMQQLQSPPQAQTHPAMQPVQQIPQAQQGQQQMQMKQQELNYTQLQTPGAIDPSRIQQGIQSAQERAWKS.

Positions 1–118 (MHRGGDRSTD…RGDHSDHDNR (118 aa)) are disordered. Composition is skewed to gly residues over residues 52–70 (RGGG…GGGR) and 81–98 (SGGG…GEPG). The span at 109 to 118 (RGDHSDHDNR) shows a compositional bias: basic and acidic residues. 2 RRM domains span residues 122 to 203 (VKLF…YADG) and 213 to 293 (HKLF…FADP). 2 disordered regions span residues 292–414 (DPKR…GHHL) and 566–594 (QQSN…AIIP). The span at 301-311 (SRGGPAFGGPG) shows a compositional bias: gly residues. Over residues 342 to 358 (HPSSPRSAPHQFNNFGS) the composition is skewed to polar residues. A compositionally biased stretch (low complexity) spans 368-377 (TVTSTTDTAT). Composition is skewed to polar residues over residues 383-401 (FSGN…SSHM) and 575-594 (PTQG…AIIP). The WW domain occupies 609-642 (VPLTCNWTEHTSPEGFKYYYNSITRESKWDKPEE). Positions 670–738 (MQQLQSPPQA…QSAQERAWKS (69 aa)) are disordered. Positions 683–706 (PAMQPVQQIPQAQQGQQQMQMKQQ) are enriched in low complexity. A compositionally biased stretch (polar residues) spans 723–732 (RIQQGIQSAQ).

Interacts with FY. Binds to SF1, FIK, RPRD1B, Os09g0509000/LOC_Os09g33480 and MADS8. As to expression, mostly expressed in young flowers (panicles) and stems, and also present in young seedlings leaves and roots.

It is found in the nucleus. Its function is as follows. Plays a major role in the promotion of the transition of the vegetative meristem to reproductive development. Required for RNA-mediated chromatin silencing of a range of loci in the genome. Cotranscriptionally recognizes aberrant RNA and marks it for silencing. Controls alternative cleavage and polyadenylation on pre-mRNAs and antisense RNAs. Regulates flowering time, seed size and cell volume, probably via the modulation of cell size. This is Flowering time control protein FCA from Oryza sativa subsp. japonica (Rice).